The primary structure comprises 469 residues: Glutamate--tRNA ligase (469 aa).

The short motif at 9-19 is the 'HIGH' region element; the sequence is PSPTGMFHVGG. Zn(2+) contacts are provided by Cys100, Cys102, Cys122, and Asp124. The 'KMSKS' region motif lies at 232 to 236; sequence KLSKR. ATP is bound at residue Lys235.

The protein belongs to the class-I aminoacyl-tRNA synthetase family. Glutamate--tRNA ligase type 1 subfamily. As to quaternary structure, monomer. The cofactor is Zn(2+).

The protein localises to the cytoplasm. It catalyses the reaction tRNA(Glu) + L-glutamate + ATP = L-glutamyl-tRNA(Glu) + AMP + diphosphate. Its function is as follows. Catalyzes the attachment of glutamate to tRNA(Glu) in a two-step reaction: glutamate is first activated by ATP to form Glu-AMP and then transferred to the acceptor end of tRNA(Glu). The polypeptide is Glutamate--tRNA ligase (Salinispora arenicola (strain CNS-205)).